A 382-amino-acid polypeptide reads, in one-letter code: Lipid-A-disaccharide synthase (382 aa).

The protein belongs to the LpxB family.

It carries out the reaction 2-N,3-O-bis[(3R)-3-hydroxytetradecanoyl]-alpha-D-glucosaminyl 1-phosphate + UDP-2-N,3-O-bis[(3R)-3-hydroxytetradecanoyl]-alpha-D-glucosamine = lipid A disaccharide (E. coli) + UDP + H(+). The catalysed reaction is a lipid X + a UDP-2-N,3-O-bis[(3R)-3-hydroxyacyl]-alpha-D-glucosamine = a lipid A disaccharide + UDP + H(+). Its pathway is glycolipid biosynthesis; lipid IV(A) biosynthesis; lipid IV(A) from (3R)-3-hydroxytetradecanoyl-[acyl-carrier-protein] and UDP-N-acetyl-alpha-D-glucosamine: step 5/6. Its function is as follows. Condensation of UDP-2,3-diacylglucosamine and 2,3-diacylglucosamine-1-phosphate to form lipid A disaccharide, a precursor of lipid A, a phosphorylated glycolipid that anchors the lipopolysaccharide to the outer membrane of the cell. This chain is Lipid-A-disaccharide synthase, found in Escherichia coli O127:H6 (strain E2348/69 / EPEC).